Here is a 227-residue protein sequence, read N- to C-terminus: MTHLLQDKIIVRQFNVQPYEPVSLAMHNFTDRRDDKTPDEIWLVQHPRVFTQGQAGKEEHVLMPGDIPVIQSDRGGQVTYHGPGQQVMYVLIDLKRRKLGVRQLVTAIENTVIGTLAHFQIKAHARPDAPGVYVGERKICSLGLRIRKGCSFHGLALNIAMDLSPFLRINPCGYAGMEMTQVSDLVPGVTLDDTSPVLVNTFLQLVGYSAPEFIPWALDVQGEPLPD.

The BPL/LPL catalytic domain maps to 35–210; that stretch reads DKTPDEIWLV…TFLQLVGYSA (176 aa). Substrate contacts are provided by residues 74–81, 141–143, and 154–156; these read RGGQVTYH, SLG, and GLA. Residue Cys172 is the Acyl-thioester intermediate of the active site.

This sequence belongs to the LipB family.

It is found in the cytoplasm. The enzyme catalyses octanoyl-[ACP] + L-lysyl-[protein] = N(6)-octanoyl-L-lysyl-[protein] + holo-[ACP] + H(+). It functions in the pathway protein modification; protein lipoylation via endogenous pathway; protein N(6)-(lipoyl)lysine from octanoyl-[acyl-carrier-protein]: step 1/2. Its function is as follows. Catalyzes the transfer of endogenously produced octanoic acid from octanoyl-acyl-carrier-protein onto the lipoyl domains of lipoate-dependent enzymes. Lipoyl-ACP can also act as a substrate although octanoyl-ACP is likely to be the physiological substrate. The protein is Octanoyltransferase of Pectobacterium atrosepticum (strain SCRI 1043 / ATCC BAA-672) (Erwinia carotovora subsp. atroseptica).